We begin with the raw amino-acid sequence, 211 residues long: Large ribosomal subunit protein uL3 (211 aa).

The span at 130–139 (QDATHGNSLS) shows a compositional bias: polar residues. Residues 130–151 (QDATHGNSLSHRAPGSIGQNQT) form a disordered region. Gln-150 bears the N5-methylglutamine mark.

The protein belongs to the universal ribosomal protein uL3 family. Part of the 50S ribosomal subunit. Forms a cluster with proteins L14 and L19. In terms of processing, methylated by PrmB.

Functionally, one of the primary rRNA binding proteins, it binds directly near the 3'-end of the 23S rRNA, where it nucleates assembly of the 50S subunit. This chain is Large ribosomal subunit protein uL3, found in Alcanivorax borkumensis (strain ATCC 700651 / DSM 11573 / NCIMB 13689 / SK2).